The primary structure comprises 163 residues: MPLLDSFKVDHTKMPAPAVRLAKTMTTPKGDEIAVFDLRFCRPNQEILSEKGIHTLEHLFAGFMREHLNGEGIEIIDISPMGCRTGFYMSLIGVPKNARVLEAWRRSMEDILTLKSEEEIPELNIYQCGTACMHSLKEAQEIARTVLDRGISIMDNEALKLQL.

3 residues coordinate Fe cation: H54, H58, and C128.

This sequence belongs to the LuxS family. As to quaternary structure, homodimer. Fe cation is required as a cofactor.

The enzyme catalyses S-(5-deoxy-D-ribos-5-yl)-L-homocysteine = (S)-4,5-dihydroxypentane-2,3-dione + L-homocysteine. Functionally, involved in the synthesis of autoinducer 2 (AI-2) which is secreted by bacteria and is used to communicate both the cell density and the metabolic potential of the environment. The regulation of gene expression in response to changes in cell density is called quorum sensing. Catalyzes the transformation of S-ribosylhomocysteine (RHC) to homocysteine (HC) and 4,5-dihydroxy-2,3-pentadione (DPD). This is S-ribosylhomocysteine lyase from Wolinella succinogenes (strain ATCC 29543 / DSM 1740 / CCUG 13145 / JCM 31913 / LMG 7466 / NCTC 11488 / FDC 602W) (Vibrio succinogenes).